The following is a 331-amino-acid chain: Ketol-acid reductoisomerase (NADP(+)) (331 aa).

One can recognise a KARI N-terminal Rossmann domain in the interval Ala-2–Thr-182. Residues Tyr-25 to Gln-28, Ser-51, Ser-53, and Asp-83 to Gln-86 each bind NADP(+). Residue His-108 is part of the active site. Gly-134 contributes to the NADP(+) binding site. A KARI C-terminal knotted domain is found at Asn-183 to Leu-328. Positions 191, 195, 227, and 231 each coordinate Mg(2+). Substrate is bound at residue Ser-252.

It belongs to the ketol-acid reductoisomerase family. The cofactor is Mg(2+).

The enzyme catalyses (2R)-2,3-dihydroxy-3-methylbutanoate + NADP(+) = (2S)-2-acetolactate + NADPH + H(+). It catalyses the reaction (2R,3R)-2,3-dihydroxy-3-methylpentanoate + NADP(+) = (S)-2-ethyl-2-hydroxy-3-oxobutanoate + NADPH + H(+). The protein operates within amino-acid biosynthesis; L-isoleucine biosynthesis; L-isoleucine from 2-oxobutanoate: step 2/4. It functions in the pathway amino-acid biosynthesis; L-valine biosynthesis; L-valine from pyruvate: step 2/4. In terms of biological role, involved in the biosynthesis of branched-chain amino acids (BCAA). Catalyzes an alkyl-migration followed by a ketol-acid reduction of (S)-2-acetolactate (S2AL) to yield (R)-2,3-dihydroxy-isovalerate. In the isomerase reaction, S2AL is rearranged via a Mg-dependent methyl migration to produce 3-hydroxy-3-methyl-2-ketobutyrate (HMKB). In the reductase reaction, this 2-ketoacid undergoes a metal-dependent reduction by NADPH to yield (R)-2,3-dihydroxy-isovalerate. The protein is Ketol-acid reductoisomerase (NADP(+)) of Prochlorococcus marinus (strain MIT 9313).